The primary structure comprises 594 residues: Pentatricopeptide repeat-containing protein At1g15480, mitochondrial (594 aa).

The transit peptide at 1–67 (MFALSKVLRR…WSSSTGRRSL (67 aa)) directs the protein to the mitochondrion. The segment covering 62 to 75 (TGRRSLSSDAGAKT) has biased composition (low complexity). The segment at 62–109 (TGRRSLSSDAGAKTTGDDDDLEDKNVDLATPDETSSDSEDGEEFSGDE) is disordered. Over residues 95–109 (TSSDSEDGEEFSGDE) the composition is skewed to acidic residues. PPR repeat units lie at residues 226-260 (GELV…GFPL), 261-294 (STFT…NLKP), 295-329 (NLNT…GVEL), 330-364 (DLRA…SLEE), 432-466 (SSNV…GCNI), 467-502 (GALT…QIKP), and 503-537 (LMSS…GYQS).

It belongs to the PPR family. P subfamily.

It is found in the mitochondrion. This Arabidopsis thaliana (Mouse-ear cress) protein is Pentatricopeptide repeat-containing protein At1g15480, mitochondrial.